A 499-amino-acid polypeptide reads, in one-letter code: Bifunctional purine biosynthesis protein PurH (499 aa).

In terms of domain architecture, MGS-like spans 1–144; that stretch reads MIKRALISVF…KNFKDVVVLT (144 aa).

This sequence belongs to the PurH family.

The catalysed reaction is (6R)-10-formyltetrahydrofolate + 5-amino-1-(5-phospho-beta-D-ribosyl)imidazole-4-carboxamide = 5-formamido-1-(5-phospho-D-ribosyl)imidazole-4-carboxamide + (6S)-5,6,7,8-tetrahydrofolate. It carries out the reaction IMP + H2O = 5-formamido-1-(5-phospho-D-ribosyl)imidazole-4-carboxamide. Its pathway is purine metabolism; IMP biosynthesis via de novo pathway; 5-formamido-1-(5-phospho-D-ribosyl)imidazole-4-carboxamide from 5-amino-1-(5-phospho-D-ribosyl)imidazole-4-carboxamide (10-formyl THF route): step 1/1. The protein operates within purine metabolism; IMP biosynthesis via de novo pathway; IMP from 5-formamido-1-(5-phospho-D-ribosyl)imidazole-4-carboxamide: step 1/1. In Clostridium botulinum (strain Loch Maree / Type A3), this protein is Bifunctional purine biosynthesis protein PurH.